The chain runs to 662 residues: 3',5'-cyclic-AMP phosphodiesterase, isoform F (662 aa).

Disordered stretches follow at residues 79-108 (VPAS…LSQG) and 207-245 (SAGQ…RLPT). Residues 80–98 (PASNKSRRPNQSSSASRSG) show a composition bias toward polar residues. The PDEase domain occupies 248–577 (VETPRENELG…DYYQSMIPPS (330 aa)). The active-site Proton donor is the histidine 324. 324-328 (HNSLH) contacts 3',5'-cyclic AMP. Residues histidine 328, histidine 364, aspartate 365, and aspartate 482 each coordinate a divalent metal cation. 3',5'-cyclic AMP is bound by residues aspartate 365, aspartate 482, and glutamine 533. Over residues 599 to 616 (EESDQENLAELEEGDESG) the composition is skewed to acidic residues. Residues 599–662 (EESDQENLAE…CQNQPQHGGM (64 aa)) form a disordered region. Residues 617-634 (GESTTTGTTGTTAASALS) show a composition bias toward low complexity. Residues 635-646 (GAGGGGGGGGGM) are compositionally biased toward gly residues. Residues 652–662 (GCQNQPQHGGM) are compositionally biased toward polar residues.

It belongs to the cyclic nucleotide phosphodiesterase family. PDE4 subfamily. As to quaternary structure, monomer. A divalent metal cation is required as a cofactor.

It carries out the reaction 3',5'-cyclic AMP + H2O = AMP + H(+). The protein operates within purine metabolism; 3',5'-cyclic AMP degradation; AMP from 3',5'-cyclic AMP: step 1/1. Hydrolyzes the second messenger cAMP, which is a key regulator of many important physiological processes. Vital for female fertility. Required for learning/memory. The sequence is that of 3',5'-cyclic-AMP phosphodiesterase, isoform F from Drosophila melanogaster (Fruit fly).